A 43-amino-acid polypeptide reads, in one-letter code: Cytin chain A (43 aa).

It belongs to the protease inhibitor I13 (potato type I serine protease inhibitor) family. As to quaternary structure, heterodimer of an A chain and a B chain, linked by a disulfide bond.

Its function is as follows. Inhibitor of chymotrypsin. This chain is Cytin chain A, found in Theromyzon tessulatum (Duck leech).